A 483-amino-acid chain; its full sequence is Regulatory protein ViaA (483 aa).

Belongs to the ViaA family. Homodimer. Interacts with RavA.

The protein resides in the cytoplasm. Component of the RavA-ViaA chaperone complex, which may act on the membrane to optimize the function of some of the respiratory chains. ViaA stimulates the ATPase activity of RavA. The protein is Regulatory protein ViaA of Escherichia coli O9:H4 (strain HS).